Here is a 225-residue protein sequence, read N- to C-terminus: Uracil-DNA glycosylase (225 aa).

Residue Asp-61 is the Proton acceptor of the active site.

The protein belongs to the uracil-DNA glycosylase (UDG) superfamily. UNG family.

The protein resides in the cytoplasm. The catalysed reaction is Hydrolyzes single-stranded DNA or mismatched double-stranded DNA and polynucleotides, releasing free uracil.. Functionally, excises uracil residues from the DNA which can arise as a result of misincorporation of dUMP residues by DNA polymerase or due to deamination of cytosine. The polypeptide is Uracil-DNA glycosylase (Actinobacillus pleuropneumoniae serotype 5b (strain L20)).